Here is a 247-residue protein sequence, read N- to C-terminus: DNA polymerase sliding clamp (247 aa).

The protein belongs to the PCNA family. Homotrimer. The subunits circularize to form a toroid; DNA passes through its center. Replication factor C (RFC) is required to load the toroid on the DNA.

Sliding clamp subunit that acts as a moving platform for DNA processing. Responsible for tethering the catalytic subunit of DNA polymerase and other proteins to DNA during high-speed replication. The sequence is that of DNA polymerase sliding clamp from Methanoculleus marisnigri (strain ATCC 35101 / DSM 1498 / JR1).